A 1113-amino-acid polypeptide reads, in one-letter code: MLRGQTLPWRAALQQVSRPFIPRPLLAPSRYNVTARSILNASRLHRSLPTSRAFSSSSIRRREKPPPGDEKDDPAQKEQKDANEEKDVERAPDARRKAADPSGKQGSSHEPGAPTSGFARRKEKAGADKEQRGLEEDSKKDGNAVEGKGNSSDTPSPIPVNGGSDSRPSGANNGGNEDGGKKGKKGSGEKALQKPSVPEVYPQVMAIPIAKRPLFPGFYKAITIRDPNVAAAIQDMMKRGQPYVGAFLFKDENADGDVIENLDDVYDVGVFAQITAAYPLRGEASGVTAVLYPHRRIKVSSLLPPSDAAKAGTTDEKTSERRGDVVASFEEGTAELAPKDHYEPTSFLRKYPVSLVNVENLAEEPYDKKSAIIRAVTSEIVNVCKEIASLNPLFRDQISAFYTDQFPGNLSDEPAKLADFAAAVSAGELNEMQEVLELMNIEERLPKALVVLKKELMNAQLQSKISKDVEAKIQKRQREYWLMEQMKGIKRELGIESDGKDKLVEKFKEKAEKLAMPDAVKKVFDEELNKLAHLEPAASEFNVTRNYLDWLTQIPWGQKSVENFGIQHAVKVLDEDHYGLKDVKDRILEFIAVGKLRGTVEGKILCLVGPPGVGKTSIGKSIARALNRQYYRFSVGGLTDVAEIKGHRRTYVGALPGRIIQALKKCQTENPLILIDEIDKIGRGHQGDPSSALLELLDPEQNSSFLDHYMDVPVDLSKVLFVCTANVTDTIPRPLLDRMELIELSGYVADEKMAIAQRYLAPAARELTGLKEVDVNLTEEAVEELIKSYCRESGVRNLKKQIEKVYRKAAYKIVRDLGEDVLAEEKALTDEGKAVQEESQKETESPDSKSPVDPEKSTTETPRVALKVPESVQLSIGKDSLTDYVGPPIFTADRLYDTFPPGVTMGLAWTSMGGAALYVESILENALTPQSRPGIDITGNLQNVMKESSQIAYSFAKSVMAKQFPENRFFEKAKLHMHCPEGAVPKDGPSAGITMATSLLSLALNHPLDPTIAMTGELTVTGKVLRIGGLREKTVAARRAGAKKIVFPADNMSDWLELPENIKEGIEGHAVGWYSEVFDLLFTDLDKGAANHVWQKQLAEKPEKKSNEVEEDE.

A mitochondrion-targeting transit peptide spans 1–61 (MLRGQTLPWR…RAFSSSSIRR (61 aa)). Positions 42-196 (SRLHRSLPTS…SGEKALQKPS (155 aa)) are disordered. Composition is skewed to basic and acidic residues over residues 64-99 (KPPPGDEKDDPAQKEQKDANEEKDVERAPDARRKAA), 124-143 (KAGADKEQRGLEEDSKKDGN), and 178-192 (DGGKKGKKGSGEKAL). Residues 204 to 456 (VMAIPIAKRP…KALVVLKKEL (253 aa)) enclose the Lon N-terminal domain. An ATP-binding site is contributed by 609–616 (GPPGVGKT). Residues 828–858 (LTDEGKAVQEESQKETESPDSKSPVDPEKST) are compositionally biased toward basic and acidic residues. A disordered region spans residues 828-864 (LTDEGKAVQEESQKETESPDSKSPVDPEKSTTETPRV). The Lon proteolytic domain maps to 898 to 1084 (TFPPGVTMGL…SEVFDLLFTD (187 aa)). Catalysis depends on residues S990 and K1033.

It belongs to the peptidase S16 family. In terms of assembly, homohexamer or homoheptamer. Organized in a ring with a central cavity.

It is found in the mitochondrion matrix. It catalyses the reaction Hydrolysis of proteins in presence of ATP.. In terms of biological role, ATP-dependent serine protease that mediates the selective degradation of misfolded, unassembled or oxidatively damaged polypeptides as well as certain short-lived regulatory proteins in the mitochondrial matrix. May also have a chaperone function in the assembly of inner membrane protein complexes. Participates in the regulation of mitochondrial gene expression and in the maintenance of the integrity of the mitochondrial genome. Binds to mitochondrial DNA in a site-specific manner. The polypeptide is Lon protease homolog, mitochondrial (pim1) (Aspergillus niger (strain ATCC MYA-4892 / CBS 513.88 / FGSC A1513)).